Consider the following 348-residue polypeptide: MPEEKIRLTQLSHGGGCGCKIAPAVLQKILAGTTGSIIPPQLLVGTETSDDAAVYQINAQQAIVATTDFFMPIVDNPRDFGRIAATNAISDVYAMGGTPLFALALVGMPVNVLPLETIGQILQGGEDVCRAAGIPIAGGHTIDSVEPIYGLVAIGLVNPEHLKRNSGAKSGDKLILGKQLGVGIYSAALKKDQLQAKDYEAMVETTTQLNTPGPVLACLDGVHAVTDVTGFGLAGHLLEVCKGSGLRATVNYQDLPVLPKAREFMQAGLMTGASGRNWASYGEGVRIADGLEGIAQTLLTDPQTSGGLLVSCSPETVTEVLSLFLQHGFPHVSVIGEMAEGEPGIDVI.

C17 is an active-site residue. Residues K20 and 48 to 50 (TSD) each bind ATP. D51 contacts Mg(2+). ATP-binding positions include D68, D91, and 139-141 (GHT). D91 lines the Mg(2+) pocket. D227 lines the Mg(2+) pocket.

It belongs to the selenophosphate synthase 1 family. Class I subfamily. As to quaternary structure, homodimer. It depends on Mg(2+) as a cofactor.

The catalysed reaction is hydrogenselenide + ATP + H2O = selenophosphate + AMP + phosphate + 2 H(+). Its function is as follows. Synthesizes selenophosphate from selenide and ATP. This Dechloromonas aromatica (strain RCB) protein is Selenide, water dikinase.